The following is an 828-amino-acid chain: Periplasmic nitrate reductase (828 aa).

The segment at residues 1–32 is a signal peptide (tat-type signal); it reads MNLSRRDFMKANAAMAAATAAGLSIPVKNVEA. A 4Fe-4S Mo/W bis-MGD-type domain is found at 37–93; that stretch reads IKWDKAVCRFCGTGCAVLVGTKDGRVVASQGDPDAEVNRGLNCIKGYFLPKIMYGKD. Positions 44, 47, 51, and 79 each coordinate [4Fe-4S] cluster. Mo-bis(molybdopterin guanine dinucleotide)-binding positions include lysine 81, glutamine 148, asparagine 173, cysteine 177, 210 to 217, 241 to 245, methionine 371, glutamine 375, asparagine 481, 507 to 508, lysine 530, aspartate 557, and 717 to 726; these read WGSNMAEM, STFEH, SD, and TGRVLEHWHT. Residue phenylalanine 793 coordinates substrate. Asparagine 801 and lysine 818 together coordinate Mo-bis(molybdopterin guanine dinucleotide).

Belongs to the prokaryotic molybdopterin-containing oxidoreductase family. NasA/NapA/NarB subfamily. In terms of assembly, component of the periplasmic nitrate reductase NapAB complex composed of NapA and NapB. [4Fe-4S] cluster serves as cofactor. Requires Mo-bis(molybdopterin guanine dinucleotide) as cofactor. Predicted to be exported by the Tat system. The position of the signal peptide cleavage has not been experimentally proven.

It localises to the periplasm. It carries out the reaction 2 Fe(II)-[cytochrome] + nitrate + 2 H(+) = 2 Fe(III)-[cytochrome] + nitrite + H2O. Functionally, catalytic subunit of the periplasmic nitrate reductase complex NapAB. Receives electrons from NapB and catalyzes the reduction of nitrate to nitrite. In Aggregatibacter actinomycetemcomitans (Actinobacillus actinomycetemcomitans), this protein is Periplasmic nitrate reductase.